The chain runs to 696 residues: DNA ligase (696 aa).

NAD(+) is bound by residues 36 to 40 (DAEYD), 85 to 86 (SL), and Glu123. Lys125 (N6-AMP-lysine intermediate) is an active-site residue. The NAD(+) site is built by Arg146, Glu181, Lys319, and Lys343. Residues Cys437, Cys440, Cys455, and Cys461 each coordinate Zn(2+). Residues 618–696 (PEGTSLAGKT…EDGLKALLGL (79 aa)) form the BRCT domain.

The protein belongs to the NAD-dependent DNA ligase family. LigA subfamily. Requires Mg(2+) as cofactor. Mn(2+) is required as a cofactor.

The catalysed reaction is NAD(+) + (deoxyribonucleotide)n-3'-hydroxyl + 5'-phospho-(deoxyribonucleotide)m = (deoxyribonucleotide)n+m + AMP + beta-nicotinamide D-nucleotide.. Functionally, DNA ligase that catalyzes the formation of phosphodiester linkages between 5'-phosphoryl and 3'-hydroxyl groups in double-stranded DNA using NAD as a coenzyme and as the energy source for the reaction. It is essential for DNA replication and repair of damaged DNA. In Bordetella pertussis (strain Tohama I / ATCC BAA-589 / NCTC 13251), this protein is DNA ligase.